We begin with the raw amino-acid sequence, 20 residues long: 21 kDa cold shock-induced protein (20 aa).

Over residues 1 to 12 (TDSIKETIKETV) the composition is skewed to basic and acidic residues. Residues 1–20 (TDSIKETIKETVNHQAEWPY) form a disordered region.

The protein is 21 kDa cold shock-induced protein of Streptococcus thermophilus.